Reading from the N-terminus, the 368-residue chain is 3-isopropylmalate dehydrogenase (368 aa).

77-88 contributes to the NAD(+) binding site; the sequence is GPKWGTGAVRPE. Residues Arg-95, Arg-105, Arg-134, and Asp-226 each contribute to the substrate site. Mg(2+) contacts are provided by Asp-226, Asp-251, and Asp-255. 290–301 contacts NAD(+); the sequence is GSAPDLPANKVN.

This sequence belongs to the isocitrate and isopropylmalate dehydrogenases family. Homodimer. Mg(2+) serves as cofactor. It depends on Mn(2+) as a cofactor.

The protein localises to the cytoplasm. The enzyme catalyses (2R,3S)-3-isopropylmalate + NAD(+) = 4-methyl-2-oxopentanoate + CO2 + NADH. Its pathway is amino-acid biosynthesis; L-leucine biosynthesis; L-leucine from 3-methyl-2-oxobutanoate: step 3/4. Catalyzes the oxidation of 3-carboxy-2-hydroxy-4-methylpentanoate (3-isopropylmalate) to 3-carboxy-4-methyl-2-oxopentanoate. The product decarboxylates to 4-methyl-2 oxopentanoate. This chain is 3-isopropylmalate dehydrogenase (LEU2), found in Kodamaea ohmeri (Yeast).